The chain runs to 212 residues: MTELYCERKTLADLIAFASVEGLPVGEAAKRLCMSRQGAYKAVKALREAGYLSEGPVIKLTQKGRDALSIVLRNLLRYFDIASIKLVGRVVTGLGEGAFYMSLEGYRRAIERELGFTPYPGTLNIKLEPQSLAHRRYLDGLPGIHIPGFTNGMRTYGAVKAFRARLADVEGAVVMPERTHHPVDVIEFIAPVRVRDVLGLKDGDRVELEVYL.

The interval 1–83 (MTELYCERKT…NLLRYFDIAS (83 aa)) is unknown. The tract at residues 84–212 (IKLVGRVVTG…GDRVELEVYL (129 aa)) is riboflavin kinase. 93–98 (GLGEGA) is a CDP binding site. Residues Thr122 and Asn124 each contribute to the Mg(2+) site. Residues Thr179 and Glu187 each contribute to the FMN site. 192-195 (VRVR) contributes to the CDP binding site.

It belongs to the archaeal riboflavin kinase family. It depends on Mg(2+) as a cofactor.

It carries out the reaction riboflavin + CTP = CDP + FMN + H(+). It functions in the pathway cofactor biosynthesis; FMN biosynthesis; FMN from riboflavin (CTP route): step 1/1. Functionally, catalyzes the CTP-dependent phosphorylation of riboflavin (vitamin B2) to form flavin mononucleotide (FMN). In Pyrobaculum calidifontis (strain DSM 21063 / JCM 11548 / VA1), this protein is Riboflavin kinase (ribK).